The primary structure comprises 971 residues: Kinesin-like protein KIN-14C (971 aa).

The Calponin-homology (CH) domain occupies 14–119 (ANRRAEVIDW…CLLALKDNVA (106 aa)). The stretch at 272–357 (IKALETLVNG…QMETKARQME (86 aa)) forms a coiled coil. Residues 472-799 (NIRVYCRVRP…LKFAERVSGV (328 aa)) enclose the Kinesin motor domain. 556–563 (GQTGSGKT) is an ATP binding site. Residues 809–844 (EGKDIKELLEQVASLKDTIARKDMEIEQLQLLKSKS) adopt a coiled-coil conformation. A compositionally biased stretch (polar residues) spans 839–881 (LLKSKSPNSMTDRNGSNLLRQSTSSTGLSSLPVASQQNQQLSG). The disordered stretch occupies residues 839-971 (LLKSKSPNSM…GSLAKPSKRR (133 aa)).

This sequence belongs to the TRAFAC class myosin-kinesin ATPase superfamily. Kinesin family. KIN-14 subfamily.

The sequence is that of Kinesin-like protein KIN-14C from Oryza sativa subsp. japonica (Rice).